A 542-amino-acid chain; its full sequence is Putative serine/threonine-protein kinase L205 (542 aa).

The span at 20–30 (FEKKSVGHNSD) shows a compositional bias: basic and acidic residues. The interval 20–49 (FEKKSVGHNSDDEYDDTVPYNEDDETSEEE) is disordered. Acidic residues predominate over residues 31-49 (DEYDDTVPYNEDDETSEEE). Residues 69–538 (YLLLKKIGSG…ADELLKHPWL (470 aa)) enclose the Protein kinase domain. Residues 75 to 83 (IGSGNNASV) and K98 contribute to the ATP site. D201 serves as the catalytic Proton acceptor. Residues 278–314 (EELIPDDPDNNEKYYDSTDSEEYDYSDNSDYYDDDED) are disordered. The segment covering 295–314 (TDSEEYDYSDNSDYYDDDED) has biased composition (acidic residues).

Belongs to the protein kinase superfamily. Ser/Thr protein kinase family.

It catalyses the reaction L-seryl-[protein] + ATP = O-phospho-L-seryl-[protein] + ADP + H(+). The catalysed reaction is L-threonyl-[protein] + ATP = O-phospho-L-threonyl-[protein] + ADP + H(+). The chain is Putative serine/threonine-protein kinase L205 from Acanthamoeba polyphaga (Amoeba).